Consider the following 217-residue polypeptide: 3,4-dihydroxy-2-butanone 4-phosphate synthase (217 aa).

Residues 37-38 (RE), Asp42, 150-154 (RGGHT), and Glu174 each bind D-ribulose 5-phosphate. A Mg(2+)-binding site is contributed by Glu38. His153 provides a ligand contact to Mg(2+).

The protein belongs to the DHBP synthase family. In terms of assembly, homodimer. Mg(2+) serves as cofactor. Requires Mn(2+) as cofactor.

The enzyme catalyses D-ribulose 5-phosphate = (2S)-2-hydroxy-3-oxobutyl phosphate + formate + H(+). Its pathway is cofactor biosynthesis; riboflavin biosynthesis; 2-hydroxy-3-oxobutyl phosphate from D-ribulose 5-phosphate: step 1/1. In terms of biological role, catalyzes the conversion of D-ribulose 5-phosphate to formate and 3,4-dihydroxy-2-butanone 4-phosphate. This Escherichia coli O17:K52:H18 (strain UMN026 / ExPEC) protein is 3,4-dihydroxy-2-butanone 4-phosphate synthase.